A 469-amino-acid chain; its full sequence is Argininosuccinate lyase (469 aa).

The protein belongs to the lyase 1 family. Argininosuccinate lyase subfamily.

The protein localises to the cytoplasm. It carries out the reaction 2-(N(omega)-L-arginino)succinate = fumarate + L-arginine. It participates in amino-acid biosynthesis; L-arginine biosynthesis; L-arginine from L-ornithine and carbamoyl phosphate: step 3/3. The chain is Argininosuccinate lyase from Burkholderia multivorans (strain ATCC 17616 / 249).